We begin with the raw amino-acid sequence, 591 residues long: Aspartate--tRNA(Asp/Asn) ligase (591 aa).

L-aspartate is bound at residue E176. The segment at 200–203 (QLFK) is aspartate. Residue R222 participates in L-aspartate binding. ATP contacts are provided by residues 222 to 224 (RDE) and Q231. Position 450 (H450) interacts with L-aspartate. E484 is an ATP binding site. L-aspartate is bound at residue R491. 536 to 539 (GLDR) provides a ligand contact to ATP.

The protein belongs to the class-II aminoacyl-tRNA synthetase family. Type 1 subfamily. In terms of assembly, homodimer.

Its subcellular location is the cytoplasm. The enzyme catalyses tRNA(Asx) + L-aspartate + ATP = L-aspartyl-tRNA(Asx) + AMP + diphosphate. In terms of biological role, aspartyl-tRNA synthetase with relaxed tRNA specificity since it is able to aspartylate not only its cognate tRNA(Asp) but also tRNA(Asn). Reaction proceeds in two steps: L-aspartate is first activated by ATP to form Asp-AMP and then transferred to the acceptor end of tRNA(Asp/Asn). This chain is Aspartate--tRNA(Asp/Asn) ligase, found in Bacillus cereus (strain ATCC 10987 / NRS 248).